The sequence spans 153 residues: LOB domain-containing protein 26 (153 aa).

One can recognise an LOB domain in the interval 4 to 105 (NPCEVCRFQN…EEVSKTKKLL (102 aa)). Residues 126 to 153 (KSKPSVLRKRKRKTKSSDESAIRVVEDS) are disordered. A compositionally biased stretch (basic and acidic residues) spans 140–153 (KSSDESAIRVVEDS).

The protein belongs to the LOB domain-containing protein family.

The sequence is that of LOB domain-containing protein 26 (LBD26) from Arabidopsis thaliana (Mouse-ear cress).